Consider the following 66-residue polypeptide: Large ribosomal subunit protein bL33c (66 aa).

It belongs to the bacterial ribosomal protein bL33 family.

It localises to the plastid. Its subcellular location is the chloroplast. The chain is Large ribosomal subunit protein bL33c from Oenothera argillicola (Appalachian evening primrose).